Here is a 958-residue protein sequence, read N- to C-terminus: Protein translocase subunit SecA (958 aa).

ATP-binding positions include glutamine 87, glycine 105–threonine 109, and aspartate 524. Positions arginine 598 to serine 617 are disordered. Residues cysteine 939, cysteine 941, cysteine 950, and histidine 951 each coordinate Zn(2+).

It belongs to the SecA family. Monomer and homodimer. Part of the essential Sec protein translocation apparatus which comprises SecA, SecYEG and auxiliary proteins SecDF-YajC and YidC. It depends on Zn(2+) as a cofactor.

It is found in the cell inner membrane. The protein resides in the cytoplasm. It carries out the reaction ATP + H2O + cellular proteinSide 1 = ADP + phosphate + cellular proteinSide 2.. In terms of biological role, part of the Sec protein translocase complex. Interacts with the SecYEG preprotein conducting channel. Has a central role in coupling the hydrolysis of ATP to the transfer of proteins into and across the cell membrane, serving both as a receptor for the preprotein-SecB complex and as an ATP-driven molecular motor driving the stepwise translocation of polypeptide chains across the membrane. The chain is Protein translocase subunit SecA from Methylobacterium sp. (strain 4-46).